A 92-amino-acid chain; its full sequence is Non-specific lipid-transfer protein B (92 aa).

4 disulfides stabilise this stretch: Cys-3/Cys-51, Cys-13/Cys-28, Cys-29/Cys-74, and Cys-49/Cys-88.

This sequence belongs to the plant LTP family.

In terms of biological role, plant non-specific lipid-transfer proteins transfer phospholipids as well as galactolipids across membranes. May play a role in wax or cutin deposition in the cell walls of expanding epidermal cells and certain secretory tissues. This chain is Non-specific lipid-transfer protein B, found in Ricinus communis (Castor bean).